We begin with the raw amino-acid sequence, 299 residues long: Probable lipid kinase YegS-like (299 aa).

The region spanning alanine 2 to threonine 133 is the DAGKc domain. Residues threonine 40, glycine 66–glutamate 72, and threonine 95 contribute to the ATP site. Positions 215, 218, and 220 each coordinate Mg(2+). Catalysis depends on glutamate 271, which acts as the Proton acceptor.

Belongs to the diacylglycerol/lipid kinase family. YegS lipid kinase subfamily. The cofactor is Mg(2+). Requires Ca(2+) as cofactor.

It localises to the cytoplasm. In terms of biological role, probably phosphorylates lipids; the in vivo substrate is unknown. The protein is Probable lipid kinase YegS-like of Citrobacter koseri (strain ATCC BAA-895 / CDC 4225-83 / SGSC4696).